A 338-amino-acid polypeptide reads, in one-letter code: Acyl-CoA-binding domain-containing protein 1 (338 aa).

A helical; Signal-anchor membrane pass occupies residues 11 to 31; it reads IIFGLIFAYLLAKLISILLAF. Asparagine 35 and asparagine 41 each carry an N-linked (GlcNAc...) asparagine glycan. A disordered region spans residues 69–89; the sequence is AEQGSLRGDEDESDDDDWEGV. The span at 77 to 89 shows a compositional bias: acidic residues; the sequence is DEDESDDDDWEGV. The region spanning 94-184 is the ACB domain; it reads LDEAFSAATA…VTQLYPAWVE (91 aa). An acyl-CoA is bound by residues 126–130, lysine 152, and tyrosine 171; that span reads YGLYK. N-linked (GlcNAc...) asparagine glycosylation is present at asparagine 191. ANK repeat units follow at residues 217 to 246, 250 to 279, 283 to 312, and 316 to 338; these read LKID…PVNA, EGRT…DVNA, EGQT…DTTI, and DGNS…KDSN.

This sequence belongs to the ACBP family. In terms of assembly, interacts with RAP2-12. Binds to SMO1-1 and SMO1-2. In terms of processing, glycosylated. In seeds, localized in the outer integument. Expressed at low levels in roots, stems, leaves, flowers, and siliques, especially within seeds.

It is found in the cell membrane. The protein resides in the secreted. The protein localises to the cell wall. It localises to the endoplasmic reticulum membrane. Binds medium- and long-chain acyl-CoA esters with very high affinity. Can interact in vitro with arachidonyl-CoA, barely with oleoyl-CoA, but not with palmitoyl-CoA. Confers tolerance and binds to lead ions Pb(2+), probably by promoting lead translocation from roots to shoots. May function as an intracellular carrier of acyl-CoA esters. Modulates negatively sterol synthesis during embryogenesis and gametophytes development via interactions with SMO1-1 and SMO1-2; sterols serve as lipid modulators for gene expression of homeodomain-leucine zipper IV transcription factors. The chain is Acyl-CoA-binding domain-containing protein 1 from Arabidopsis thaliana (Mouse-ear cress).